The following is a 629-amino-acid chain: tRNA uridine 5-carboxymethylaminomethyl modification enzyme MnmG (629 aa).

11–16 (GGGHAG) contributes to the FAD binding site. 273–287 (GPRYCPSFEDKAVRF) lines the NAD(+) pocket.

The protein belongs to the MnmG family. As to quaternary structure, homodimer. Heterotetramer of two MnmE and two MnmG subunits. Requires FAD as cofactor.

Its subcellular location is the cytoplasm. Functionally, NAD-binding protein involved in the addition of a carboxymethylaminomethyl (cmnm) group at the wobble position (U34) of certain tRNAs, forming tRNA-cmnm(5)s(2)U34. This Mycoplasma mycoides subsp. mycoides SC (strain CCUG 32753 / NCTC 10114 / PG1) protein is tRNA uridine 5-carboxymethylaminomethyl modification enzyme MnmG.